We begin with the raw amino-acid sequence, 171 residues long: SWR1 complex subunit 6 (171 aa).

The disordered stretch occupies residues 63 to 87 (DEDDDLGYLQKKQHKGSKRKTRQAK). The segment covering 73 to 85 (KKQHKGSKRKTRQ) has biased composition (basic residues). Zn(2+) contacts are provided by Cys134, Cys137, Cys145, Cys148, Cys153, Cys157, His161, and Cys166. Residues 134–166 (CSVCGYIAGYNCCLCGMRFCSIRCQNIHKDTRC) form an HIT-type zinc finger.

The protein belongs to the ZNHIT1 family. Homodimer. Component of the SWR1 chromatin-remodeling complex composed of at least ARP6/ESD1/SUF3, PIE1, SWC6, SWC2 and H2AZs (HTA8, HTA9, HTA11). Interacts directly with ARP6, PIE1 and SWC2. Interacts with FLX and SUF4, two component of the transcription activator complex FRI-C, and with ASHH2 and TAF14. Expressed in root, lateral root primordia, shoot apex, leaves, stems, inflorescences, flowers, axillary buds, developing siliques and premature seeds.

The protein localises to the nucleus speckle. It localises to the nucleus. Component of the SWR1 complex which mediates the ATP-dependent exchange of histone H2A for the H2A variant H2A.F/Z leading to transcriptional regulation of selected genes (e.g. FLC) by chromatin remodeling. Coodinates SWR1-C, FRI-C (FLC transcription activator complex), histone methyltransferase and general transcription factors. Represses flowering by positively regulating FLC and MAF4. Binds to the promoter region of FLC chromatin. The sequence is that of SWR1 complex subunit 6 (SWC6) from Arabidopsis thaliana (Mouse-ear cress).